The primary structure comprises 379 residues: All-trans-retinol dehydrogenase [NAD(+)] ADH4 (379 aa).

Thr-1 carries the post-translational modification N-acetylthreonine. Residues Cys-46, His-68, Cys-98, Cys-101, Cys-104, Cys-112, and Cys-179 each coordinate Zn(2+). NAD(+)-binding positions include 204 to 209 (GLGGVG), Asp-228, Lys-233, 297 to 299 (VGV), and Arg-374.

This sequence belongs to the zinc-containing alcohol dehydrogenase family. Class-II subfamily. In terms of assembly, homodimer. Zn(2+) is required as a cofactor.

Its subcellular location is the cytoplasm. It carries out the reaction all-trans-retinol + NAD(+) = all-trans-retinal + NADH + H(+). The enzyme catalyses 9-cis-retinol + NAD(+) = 9-cis-retinal + NADH + H(+). The catalysed reaction is 20-oxo-(5Z,8Z,11Z,14Z)-eicosatetraenoate + NAD(+) + H2O = (5Z,8Z,11Z,14Z)-eicosatetraenedioate + NADH + 2 H(+). It catalyses the reaction 20-hydroxy-(5Z,8Z,11Z,14Z)-eicosatetraenoate + NAD(+) = 20-oxo-(5Z,8Z,11Z,14Z)-eicosatetraenoate + NADH + H(+). It carries out the reaction 1,4-benzoquinone + NADH + H(+) = hydroquinone + NAD(+). Oxidation of 20-HETE is inhibited by low concentrations of N-heptylformamide. Oxidation of 20-HETE is a decreased by 55-65% by either all-trans-retinol or all-trans-retinoic acid. Strongly inhibited by omega-hydroxy fatty acids. Catalyzes the NAD-dependent oxidation of either all-trans-retinol or 9-cis-retinol. Also oxidizes long chain omega-hydroxy fatty acids, such as 20-HETE, producing both the intermediate aldehyde, 20-oxoarachidonate and the end product, a dicarboxylic acid, (5Z,8Z,11Z,14Z)-eicosatetraenedioate. Also catalyzes the reduction of benzoquinones. The polypeptide is All-trans-retinol dehydrogenase [NAD(+)] ADH4 (Struthio camelus (Common ostrich)).